A 363-amino-acid chain; its full sequence is MEHQQLRKYVELYNKEVEEFYNGAASGRPAEFHPSKVHVKSIHEKAGTANAGVEISSVGVDWDSEEKNTFFWCLSRYSIHRVDEWRSLLPRKSAMEILGYYRLLRRASASARSRKAGDDGAPIAYEMSAEWVALETKLSETVMAITEGAAEVADEEGHCEGLIDYESWKRRWVAIYSHSRIAEIRPLPRHALPLSRSATQTLERCVSRYTRTLLWCTALAGMASRSVSARAAESRGHKSLPTVVTRRQVERALCTEARSRDLHVLPRRIVLTLRKWELDYPREGKLFRTKEMAHLFLQSQLSRRDAPPVHQDENQENQENQENQEQDNTASEGESEAERDEIDEADLFRSALHENQLLKWLSK.

Residues 301–344 form a disordered region; sequence LSRRDAPPVHQDENQENQENQENQEQDNTASEGESEAERDEIDE. Over residues 302–313 the composition is skewed to basic and acidic residues; sequence SRRDAPPVHQDE. Positions 317–328 are enriched in low complexity; it reads NQENQENQEQDN. Residues 333 to 344 show a composition bias toward acidic residues; it reads GESEAERDEIDE.

Component of the UAF (upstream activation factor) complex which consists of UAF30, RRN5, RRN9, RRN10, and histones H3 and H4.

Its subcellular location is the nucleus. It is found in the nucleolus. Functionally, component of the UAF (upstream activation factor) complex which interacts with the upstream element of the RNA polymerase I promoter and forms a stable preinitiation complex. Together with SPT15/TBP UAF seems to stimulate basal transcription to a fully activated level. This is RNA polymerase I-specific transcription initiation factor RRN5 (RRN5) from Saccharomyces cerevisiae (strain ATCC 204508 / S288c) (Baker's yeast).